A 933-amino-acid polypeptide reads, in one-letter code: 2-oxoglutarate dehydrogenase E1 component (933 aa).

Belongs to the alpha-ketoglutarate dehydrogenase family. As to quaternary structure, homodimer. Part of the 2-oxoglutarate dehydrogenase (OGDH) complex composed of E1 (2-oxoglutarate dehydrogenase), E2 (dihydrolipoamide succinyltransferase) and E3 (dihydrolipoamide dehydrogenase); the complex contains multiple copies of the three enzymatic components (E1, E2 and E3). Interacts (via N-terminus) with SucB, the E2 component of OGDH complex. It depends on thiamine diphosphate as a cofactor.

It catalyses the reaction N(6)-[(R)-lipoyl]-L-lysyl-[protein] + 2-oxoglutarate + H(+) = N(6)-[(R)-S(8)-succinyldihydrolipoyl]-L-lysyl-[protein] + CO2. Functionally, E1 component of the 2-oxoglutarate dehydrogenase (OGDH) complex which catalyzes the decarboxylation of 2-oxoglutarate, the first step in the conversion of 2-oxoglutarate to succinyl-CoA and CO(2). The polypeptide is 2-oxoglutarate dehydrogenase E1 component (sucA) (Escherichia coli O157:H7).